Consider the following 219-residue polypeptide: Probable nicotinate-nucleotide adenylyltransferase (219 aa).

Belongs to the NadD family.

It carries out the reaction nicotinate beta-D-ribonucleotide + ATP + H(+) = deamido-NAD(+) + diphosphate. It participates in cofactor biosynthesis; NAD(+) biosynthesis; deamido-NAD(+) from nicotinate D-ribonucleotide: step 1/1. Functionally, catalyzes the reversible adenylation of nicotinate mononucleotide (NaMN) to nicotinic acid adenine dinucleotide (NaAD). The protein is Probable nicotinate-nucleotide adenylyltransferase of Pseudomonas putida (strain GB-1).